The following is a 334-amino-acid chain: MDDGVGVRAGCIRIRCPSPRRIVSRWLSPQGKVKGKKTPMAEPRVRDSDTVRIRTSSEDDHHRVGQFSDSPPPTIPSELQRREFLFSIGMSCYLIHLIATGRQEIHKIVELRNDLDKFLECRNEELRQKQQEFVELRNDIHKFLEFHNNELRRKQLEKTETSAYSATSDVVDGPESSTDHYYSPQIIQTSMSVGGEGSLSHYVYKLENDSGGEMDQLEAELEAEFELLQIGHNQEVSEDAEGLRLGHVCPGLVEEQQGVCPYELERRLYELMETRQQEEIKELEIALDDAKQRLHLKETEASWWKDTAYIVSERIPEPSRITHSSRTHPYPLSR.

The span at 53 to 63 shows a compositional bias: basic and acidic residues; it reads IRTSSEDDHHR. The disordered stretch occupies residues 53-74; that stretch reads IRTSSEDDHHRVGQFSDSPPPT. The stretch at 273-300 forms a coiled coil; it reads ETRQQEEIKELEIALDDAKQRLHLKETE.

The protein localises to the cytoplasm. It localises to the cell cortex. Functionally, acts as a stomatal lineage scaffold which regulates subcellular localization and transient polarization of kinases (e.g. ASK7/BIN2 and ASK3/SK12) involved in asymmetric cell division (ACD) in a BASL-dependent manner. This is Protein POLAR-like 1 from Arabidopsis thaliana (Mouse-ear cress).